Here is a 635-residue protein sequence, read N- to C-terminus: Threonine--tRNA ligase (635 aa).

The editing domain stretch occupies residues 1–152 (MQLLLIHSDY…AKAAVKPEAA (152 aa)). The segment at 215 to 514 (PHVELMRRLE…TEEGKVPMLP (300 aa)) is catalytic. Residues cysteine 307, histidine 359, and histidine 483 each coordinate Zn(2+).

It belongs to the class-II aminoacyl-tRNA synthetase family. In terms of assembly, homodimer. Zn(2+) serves as cofactor.

Its subcellular location is the cytoplasm. It catalyses the reaction tRNA(Thr) + L-threonine + ATP = L-threonyl-tRNA(Thr) + AMP + diphosphate + H(+). Functionally, catalyzes the attachment of threonine to tRNA(Thr) in a two-step reaction: L-threonine is first activated by ATP to form Thr-AMP and then transferred to the acceptor end of tRNA(Thr). Also edits incorrectly charged L-seryl-tRNA(Thr). This is Threonine--tRNA ligase from Methanosarcina acetivorans (strain ATCC 35395 / DSM 2834 / JCM 12185 / C2A).